A 1027-amino-acid polypeptide reads, in one-letter code: Kinesin heavy chain isoform 5A (1027 aa).

Ala-2 carries the N-acetylalanine modification. Positions 9 to 327 constitute a Kinesin motor domain; sequence SIKVLCRFRP…LMFGQRAKTI (319 aa). 86–93 contacts ATP; sequence GQTSSGKT. Residues 174–315 form a microtubule-binding region; the sequence is VSSPEEILDV…PSSYNDAETK (142 aa). The necessary for interaction with ZFYVE27 stretch occupies residues 271-361; the sequence is EGTKSYVPYR…KTKAQKETIA (91 aa). A coiled-coil region spans residues 331 to 906; it reads ASVNLELTAE…VDRIKEAVRY (576 aa). Positions 353-1027 are interaction with BICD2; that stretch reads TKAQKETIAK…FPLHQETAAS (675 aa). Residue Thr-397 is modified to Phosphothreonine. A disordered region spans residues 906–937; it reads YKSSGKRGHSAQIAKPVRPGHYPASSPTNPYG. Residues 907-1027 are globular; the sequence is KSSGKRGHSA…FPLHQETAAS (121 aa).

It belongs to the TRAFAC class myosin-kinesin ATPase superfamily. Kinesin family. Kinesin subfamily. In terms of assembly, oligomer composed of two heavy chains and two light chains. Interacts with GRIP1. Interacts with FMR1 (via C-terminus); this interaction is increased in a mGluR-dependent manner. Interacts with BORCS5. Interacts with ZFYVE27. Interacts with VAPA, VAPB, SURF4, RAB11A (GDP-bound form), RAB11B (GDP-bound form) and RTN3 in a ZFYVE27-dependent manner. Interacts with BICD2. Interacts with DTNB.

Its subcellular location is the cytoplasm. It is found in the perinuclear region. The protein localises to the cytoskeleton. It localises to the perikaryon. It carries out the reaction ATP + H2O + a kinesin associated with a microtubule at position (n) = ADP + phosphate a kinesin associated with a microtubule at position (n+1, toward the plus end).. Its function is as follows. Microtubule-dependent motor required for slow axonal transport of neurofilament proteins (NFH, NFM and NFL). Can induce formation of neurite-like membrane protrusions in non-neuronal cells in a ZFYVE27-dependent manner. The ZFYVE27-KIF5A complex contributes to the vesicular transport of VAPA, VAPB, SURF4, RAB11A, RAB11B and RTN3 proteins in neurons. Required for anterograde axonal transportation of MAPK8IP3/JIP3 which is essential for MAPK8IP3/JIP3 function in axon elongation. The sequence is that of Kinesin heavy chain isoform 5A (Kif5a) from Mus musculus (Mouse).